We begin with the raw amino-acid sequence, 116 residues long: Diuretic hormone class 2 (116 aa).

An N-terminal signal peptide occupies residues 1 to 25 (MTNRCACFALAFLLFCLLAISSIEA). A propeptide spanning residues 26 to 75 (APMPSQSNGGYGGAGYNELEEVPDDLLMELMTRFGRTIIRARNDLENSKR) is cleaved from the precursor. Proline amide is present on Pro-106. Positions 112-116 (SETDV) are excised as a propeptide.

The protein resides in the secreted. Functionally, regulation of fluid secretion. Stimulates Malpighian tubules fluid secretion by activating the apical membrane V-ATPase via cyclic AMP of principal cells in the main secretory segment. The protein is Diuretic hormone class 2 (Dh31) of Drosophila melanogaster (Fruit fly).